We begin with the raw amino-acid sequence, 380 residues long: Succinyl-diaminopimelate desuccinylase (380 aa).

His71 provides a ligand contact to Zn(2+). Residue Asp73 is part of the active site. Zn(2+) is bound at residue Asp104. Glu136 (proton acceptor) is an active-site residue. Zn(2+) is bound by residues Glu137, Glu166, and His351.

This sequence belongs to the peptidase M20A family. DapE subfamily. As to quaternary structure, homodimer. Zn(2+) is required as a cofactor. The cofactor is Co(2+).

The enzyme catalyses N-succinyl-(2S,6S)-2,6-diaminopimelate + H2O = (2S,6S)-2,6-diaminopimelate + succinate. The protein operates within amino-acid biosynthesis; L-lysine biosynthesis via DAP pathway; LL-2,6-diaminopimelate from (S)-tetrahydrodipicolinate (succinylase route): step 3/3. Its function is as follows. Catalyzes the hydrolysis of N-succinyl-L,L-diaminopimelic acid (SDAP), forming succinate and LL-2,6-diaminopimelate (DAP), an intermediate involved in the bacterial biosynthesis of lysine and meso-diaminopimelic acid, an essential component of bacterial cell walls. The chain is Succinyl-diaminopimelate desuccinylase from Ehrlichia canis (strain Jake).